A 620-amino-acid polypeptide reads, in one-letter code: Protein phosphatase 2C-like domain-containing protein 1 (620 aa).

The PPM-type phosphatase domain maps to 173 to 611 (GIAICSNNNS…DSITVMVMFL (439 aa)).

This sequence belongs to the PP2C family.

In Mus musculus (Mouse), this protein is Protein phosphatase 2C-like domain-containing protein 1 (Pp2d1).